The following is an 87-amino-acid chain: U9-ctenitoxin-Pn1a (87 aa).

The N-terminal stretch at methionine 1 to alanine 22 is a signal peptide. Residues glutamate 23–alanine 37 constitute a propeptide that is removed on maturation. Disulfide bonds link cysteine 40–cysteine 54, cysteine 47–cysteine 64, cysteine 53–cysteine 73, and cysteine 66–cysteine 71. Residues lysine 75–arginine 87 constitute a propeptide that is removed on maturation.

This sequence belongs to the neurotoxin 02 (plectoxin) family. 01 (Tx3) subfamily. Expressed by the venom gland.

It is found in the secreted. Its function is as follows. Antagonist of L-type calcium channels (Cav1/CACNA1). This Phoneutria nigriventer (Brazilian armed spider) protein is U9-ctenitoxin-Pn1a.